The primary structure comprises 265 residues: Shikimate dehydrogenase (NADP(+)) (265 aa).

Shikimate contacts are provided by residues 15 to 17 (SLS) and threonine 62. Lysine 66 serves as the catalytic Proton acceptor. Residues asparagine 87 and aspartate 102 each contribute to the shikimate site. Residues 125 to 129 (GAGGA), 149 to 154 (NRTLEK), and leucine 209 contribute to the NADP(+) site. Tyrosine 211 contributes to the shikimate binding site. Glycine 233 serves as a coordination point for NADP(+).

The protein belongs to the shikimate dehydrogenase family. In terms of assembly, homodimer.

It catalyses the reaction shikimate + NADP(+) = 3-dehydroshikimate + NADPH + H(+). It functions in the pathway metabolic intermediate biosynthesis; chorismate biosynthesis; chorismate from D-erythrose 4-phosphate and phosphoenolpyruvate: step 4/7. In terms of biological role, involved in the biosynthesis of the chorismate, which leads to the biosynthesis of aromatic amino acids. Catalyzes the reversible NADPH linked reduction of 3-dehydroshikimate (DHSA) to yield shikimate (SA). This chain is Shikimate dehydrogenase (NADP(+)), found in Legionella pneumophila (strain Lens).